The chain runs to 294 residues: Probable endonuclease 4 (294 aa).

9 residues coordinate Zn(2+): H71, H111, E148, D182, H185, H217, D230, H232, and E262.

This sequence belongs to the AP endonuclease 2 family. The cofactor is Zn(2+).

It catalyses the reaction Endonucleolytic cleavage to 5'-phosphooligonucleotide end-products.. Endonuclease IV plays a role in DNA repair. It cleaves phosphodiester bonds at apurinic or apyrimidinic (AP) sites, generating a 3'-hydroxyl group and a 5'-terminal sugar phosphate. The protein is Probable endonuclease 4 of Acholeplasma laidlawii (strain PG-8A).